Reading from the N-terminus, the 330-residue chain is Polyprenal reductase (330 aa).

Topologically, residues 1-16 are cytoplasmic; that stretch reads MAGWAGFELSALNPLR. A helical membrane pass occupies residues 17 to 37; that stretch reads TLWLALAAAFLFALLLQLAPA. The Lumenal portion of the chain corresponds to 38–80; the sequence is RLLPSCALFQDLLRYGKTKQSGSRRPAVCRAFDVPKRYFSHFY. Residues 81-101 form a helical membrane-spanning segment; the sequence is VISVVWNGSLLWLLSQSLFLG. The Cytoplasmic segment spans residues 102-132; sequence APFPNWLSALLRTLGATQFQALEMESKASRM. The helical transmembrane segment at 133-153 threads the bilayer; sequence PAAELALSAFLVLVFLWVHSL. The Lumenal segment spans residues 154 to 169; sequence RRLFECFYVSVFSNAA. Residues 170–190 form a helical membrane-spanning segment; sequence IHVVQYCFGLVYYVLVGLTVL. The Cytoplasmic portion of the chain corresponds to 191 to 206; that stretch reads SQVPMDDKNVYVLGKN. A helical membrane pass occupies residues 207-227; sequence LLIQARWFHILGMVMFFWSSA. Topologically, residues 228 to 277 are lumenal; the sequence is HQYKCHVILSNLRRNKKGVVIHCQHRIPFGDWFEYVSSANYLAELMIYIS. A helical membrane pass occupies residues 278-298; it reads MAVTFGLHNLTWWLVVTYVFS. The Cytoplasmic portion of the chain corresponds to 299-330; it reads SQALSAFFNHKFYRSTFVSYPKHRKAFLPFLF.

Belongs to the steroid 5-alpha reductase family. Polyprenal reductase subfamily.

It is found in the endoplasmic reticulum membrane. The catalysed reaction is a di-trans,poly-cis-dolichal + NADP(+) = a di-trans,poly-cis-polyprenal + NADPH + H(+). The enzyme catalyses a 3-oxo-5alpha-steroid + NADP(+) = a 3-oxo-Delta(4)-steroid + NADPH + H(+). It carries out the reaction androst-4-ene-3,17-dione + NADPH + H(+) = 5alpha-androstan-3,17-dione + NADP(+). It catalyses the reaction 17beta-hydroxy-5alpha-androstan-3-one + NADP(+) = testosterone + NADPH + H(+). It participates in protein modification; protein glycosylation. Functionally, plays a key role in early steps of protein N-linked glycosylation by being involved in the conversion of polyprenol into dolichol. Acts as a polyprenal reductase that mediates the reduction of polyprenal into dolichal in a NADP-dependent mechanism. Dolichols are required for the synthesis of dolichol-linked monosaccharides and the oligosaccharide precursor used for N-glycosylation. Also able to convert testosterone (T) into 5-alpha-dihydrotestosterone (DHT). This is Polyprenal reductase from Mus musculus (Mouse).